A 197-amino-acid chain; its full sequence is Putative rho GDP-dissociation inhibitor 1 (197 aa).

It belongs to the Rho GDI family. Interacts with rac1A, rac1B, rac1C, racB, raCC and RacE.

It is found in the cytoplasm. In terms of biological role, regulates the GDP/GTP exchange reaction of the Rho proteins by inhibiting the dissociation of GDP from them, and the subsequent binding of GTP to them. Regulates the Rac-dependent signaling pathways controlling cytokinesis, actin reorganization and the contractile vacuole. Required for efficient accumulation of cap at the cell cortex. The sequence is that of Putative rho GDP-dissociation inhibitor 1 (rdiA) from Dictyostelium discoideum (Social amoeba).